The chain runs to 493 residues: Cyclin-dependent kinase-like 2 (493 aa).

Positions 4 to 287 constitute a Protein kinase domain; the sequence is YENLGLVGEG…CAELLHHDFF (284 aa). ATP-binding positions include 10–18 and K33; that span reads VGEGSYGMV. Positions 45–51 match the [NKR]KIAxRE motif; the sequence is KKIAMRE. D126 serves as the catalytic Proton acceptor. Residues 363–384 form a disordered region; the sequence is GEKAEKGNRASNASCLHDSRTS.

Belongs to the protein kinase superfamily. CMGC Ser/Thr protein kinase family. CDC2/CDKX subfamily. In terms of tissue distribution, expressed in testis and kidney, and at lower level in brain and lung.

It localises to the cytoplasm. It is found in the nucleus. The catalysed reaction is L-seryl-[protein] + ATP = O-phospho-L-seryl-[protein] + ADP + H(+). It carries out the reaction L-threonyl-[protein] + ATP = O-phospho-L-threonyl-[protein] + ADP + H(+). This is Cyclin-dependent kinase-like 2 from Homo sapiens (Human).